We begin with the raw amino-acid sequence, 430 residues long: Tol-Pal system protein TolB (430 aa).

The signal sequence occupies residues 1 to 21 (MKQALRVAFGFLMLWAAVLHA).

Belongs to the TolB family. In terms of assembly, the Tol-Pal system is composed of five core proteins: the inner membrane proteins TolA, TolQ and TolR, the periplasmic protein TolB and the outer membrane protein Pal. They form a network linking the inner and outer membranes and the peptidoglycan layer.

The protein resides in the periplasm. Functionally, part of the Tol-Pal system, which plays a role in outer membrane invagination during cell division and is important for maintaining outer membrane integrity. TolB occupies a key intermediary position in the Tol-Pal system because it communicates directly with both membrane-embedded components, Pal in the outer membrane and TolA in the inner membrane. The protein is Tol-Pal system protein TolB of Salmonella typhi.